A 302-amino-acid chain; its full sequence is Sulfate adenylyltransferase subunit 2 2 (302 aa).

This sequence belongs to the PAPS reductase family. CysD subfamily. As to quaternary structure, heterodimer composed of CysD, the smaller subunit, and CysN.

It carries out the reaction sulfate + ATP + H(+) = adenosine 5'-phosphosulfate + diphosphate. Its pathway is sulfur metabolism; hydrogen sulfide biosynthesis; sulfite from sulfate: step 1/3. With CysN forms the ATP sulfurylase (ATPS) that catalyzes the adenylation of sulfate producing adenosine 5'-phosphosulfate (APS) and diphosphate, the first enzymatic step in sulfur assimilation pathway. APS synthesis involves the formation of a high-energy phosphoric-sulfuric acid anhydride bond driven by GTP hydrolysis by CysN coupled to ATP hydrolysis by CysD. In Alkalilimnicola ehrlichii (strain ATCC BAA-1101 / DSM 17681 / MLHE-1), this protein is Sulfate adenylyltransferase subunit 2 2.